Consider the following 1255-residue polypeptide: Structural polyprotein (1255 aa).

The segment at 1–33 (MFPFQPMYPMQPMPYRNPFAAPRRPWFPRTDPF) is necessary for nucleocapsid assembly and virus assembly. The tract at residues 33 to 68 (FLAMQVQELTRSMANLTFKQRREAPPEGPPAKKPKR) is host transcription inhibition. Residues 41–48 (LTRSMANL) carry the Supraphysiological nuclear export signal motif. Residues 44-119 (SMANLTFKQR…KKPGKRQRMV (76 aa)) form a disordered region. N-linked (GlcNAc...) asparagine; by host glycosylation is present at Asn47. The Nuclear localization signal motif lies at 64–68 (KKPKR). Basic residues predominate over residues 80 to 92 (GKKKKNQGKKKAK). Residues 91–127 (AKTGPPNPKAQNGNKKKTNKKPGKRQRMVMKLESDKT) are binding to the viral RNA. Thr93 and Thr108 each carry phosphothreonine. Residues 104–118 (NKKKTNKKPGKRQRM) show a composition bias toward basic residues. The segment at 112-126 (PGKRQRMVMKLESDK) is ribosome-binding. Ser124 is modified (phosphoserine). The region spanning 126 to 275 (KTFPIMLEGK…KYTPENCEQW (150 aa)) is the Peptidase S3 domain. Residue Thr127 is modified to Phosphothreonine. Catalysis depends on His152, which acts as the Charge relay system. An interaction with spike glycoprotein E2 region spans residues 168 to 173 (KKASKY). Catalysis depends on charge relay system residues Asp174 and Ser226. Residues 260–264 (EKGVT) form an interaction with spike glycoprotein E2 region. A functions as an uncleaved signal peptide for the precursor of protein E3/E2 region spans residues 276–287 (SLVTTMCLLANV). Over 276 to 701 (SLVTTMCLLA…HYYHRYPMST (426 aa)) the chain is Extracellular. Cystine bridges form between Cys282–Cys291, Cys353–Cys457, Cys356–Cys361, Cys424–Cys438, Cys485–Cys600, Cys534–Cys560, and Cys536–Cys554. Asn286 is a glycosylation site (N-linked (GlcNAc...) asparagine; by host). An N-linked (GlcNAc...) asparagine; by host glycan is attached at Asn652. The chain crosses the membrane as a helical span at residues 702–722 (ILGLSICAAIVTVSIAASTWL). Residues 723-757 (LCKSRVSCLTPYRLTPNARMPLCLAVLCCARTARA) are Cytoplasmic-facing. Residues 725–729 (KSRVS) form an interaction with the capsid protein region. 3 S-palmitoyl cysteine; by host lipidation sites follow: Cys730, Cys750, and Cys751. Residues 730–750 (CLTPYRLTPNARMPLCLAVLC) form a transient transmembrane before p62-6K protein processing region. A disulfide bond links Cys730 and Cys751. At 758-772 (ETTWESLDHLWNNNQ) the chain is on the extracellular side. Residues 773–793 (QMFWIQLLIPLAALIVVTRLL) form a helical membrane-spanning segment. Arg794 is a topological domain (cytoplasmic). A helical transmembrane segment spans residues 795 to 815 (CVCCVVPFLVVAGAAGAGAYE). Residues 816-1225 (HATTMPSQAG…SKTAWTWLTS (410 aa)) lie on the Extracellular side of the membrane. 4 disulfide bridges follow: Cys862/Cys927, Cys875/Cys907, Cys876/Cys909, and Cys881/Cys891. Positions 897–914 (VYPFMWGGAYCFCDTENT) are E1 fusion peptide loop. 2 N-linked (GlcNAc...) asparagine; by host glycosylation sites follow: Asn947 and Asn1083. Disulfide bonds link Cys1072/Cys1084, Cys1114/Cys1189, Cys1119/Cys1193, and Cys1141/Cys1183. Residues 1226 to 1246 (LLGGSAVIIIIGLVLATIVAM) traverse the membrane as a helical segment. Residues 1247-1255 (YVLTNQKHN) are Cytoplasmic-facing.

Homodimer. Homomultimer. Interacts with host karyopherin KPNA4; this interaction allows the nuclear import of the viral capsid protein. Interacts with spike glycoprotein E2. Interacts with host IRAK1; the interaction leads to inhibition of IRAK1-dependent signaling. Part of a tetrameric complex composed of host CRM1, host importin alpha/beta dimer and the viral capsid; this complex blocks the receptor-mediated transport through the nuclear pore. Interacts with host phosphatase PPP1CA; this interaction dephosphorylates the capsid protein, which increases its ability to bind to the viral genome. In terms of assembly, the precursor of protein E3/E2 and E1 form a heterodimer shortly after synthesis. As to quaternary structure, interacts with spike glycoprotein E2. The precursor of protein E3/E2 and E1 form a heterodimer shortly after synthesis. Processing of the precursor of protein E3/E2 into E2 and E3 results in a heterodimer of the spike glycoproteins E2 and E1. Spike at virion surface are constituted of three E2-E1 heterodimers. After target cell attachment and endocytosis, E1 change conformation to form homotrimers. Interacts with 6K protein. Interacts with host LDLRAD3; this interaction mediates viral entry to the host cell. Interacts with spike glycoprotein E1. Processing of the precursor of protein E3/E2 into E2 and E3 results in a heterodimer of the spike glycoproteins E2 and E1. Spike at virion surface are constituted of a trimer of E2-E1 heterodimers. Interacts with 6K protein. Interacts with host LDLRAD3; this interaction mediates viral entry to the host cell. In terms of assembly, oligomer. Interacts with spike glycoprotein E1. Interacts with spike glycoprotein E2. Structural polyprotein: Specific enzymatic cleavages in vivo yield mature proteins. Capsid protein is auto-cleaved during polyprotein translation, unmasking a signal peptide at the N-terminus of the precursor of E3/E2. The remaining polyprotein is then targeted to the host endoplasmic reticulum, where host signal peptidase cleaves it into pE2, 6K and E1 proteins. pE2 is further processed to mature E3 and E2 by host furin in trans-Golgi vesicle. In terms of processing, phosphorylated on serine and threonine residues. Post-translationally, palmitoylated via thioester bonds. These palmitoylations may induce disruption of the C-terminus transmembrane. This would result in the reorientation of E2 C-terminus from lumenal to cytoplasmic side. N-glycosylated. In terms of processing, palmitoylated via thioester bonds.

It is found in the virion. It localises to the host cytoplasm. Its subcellular location is the host cell membrane. The protein localises to the host nucleus. The protein resides in the virion membrane. It is found in the host Golgi apparatus. It localises to the host trans-Golgi network. Its subcellular location is the host endoplasmic reticulum. The enzyme catalyses Autocatalytic release of the core protein from the N-terminus of the togavirus structural polyprotein by hydrolysis of a -Trp-|-Ser- bond.. Functionally, forms an icosahedral capsid with a T=4 symmetry composed of 240 copies of the capsid protein surrounded by a lipid membrane through which penetrate 80 spikes composed of trimers of E1-E2 heterodimers. The capsid protein binds to the viral RNA genome at a site adjacent to a ribosome binding site for viral genome translation following genome release. Possesses a protease activity that results in its autocatalytic cleavage from the nascent structural protein. Following its self-cleavage, the capsid protein transiently associates with ribosomes, and within several minutes the protein binds to viral RNA and rapidly assembles into icosahedric core particles. The resulting nucleocapsid eventually associates with the cytoplasmic domain of the spike glycoprotein E2 at the cell membrane, leading to budding and formation of mature virions. In case of infection, new virions attach to target cells and after clathrin-mediated endocytosis their membrane fuses with the host endosomal membrane. This leads to the release of the nucleocapsid into the cytoplasm, followed by an uncoating event necessary for the genomic RNA to become accessible. The uncoating might be triggered by the interaction of capsid proteins with ribosomes. Binding of ribosomes would release the genomic RNA since the same region is genomic RNA-binding and ribosome-binding. Specifically inhibits interleukin-1 receptor-associated kinase 1/IRAK1-dependent signaling during viral entry, representing a means by which the alphaviruses may evade innate immune detection and activation prior to viral gene expression. Inhibits host transcription. Forms a tetrameric complex with XPO1/CRM1 and the nuclear import receptor importin. This complex blocks the central channel of host nuclear pores thereby inhibiting the receptor-mediated nuclear transport and thus the host mRNA and rRNA transcription. The inhibition of transcription is linked to a cytopathic effect on the host cell. In terms of biological role, provides the signal sequence for the translocation of the precursor of protein E3/E2 to the host endoplasmic reticulum. Furin-cleaved E3 remains associated with spike glycoprotein E1 and mediates pH protection of the latter during the transport via the secretory pathway. After virion release from the host cell, the assembly protein E3 is gradually released in the extracellular space. Its function is as follows. Plays a role in viral attachment to target host cell, by binding to the cell receptor LDLRAD3. Synthesized as a p62 precursor which is processed by furin at the cell membrane just before virion budding, giving rise to E2-E1 heterodimer. The p62-E1 heterodimer is stable, whereas E2-E1 is unstable and dissociate at low pH. p62 is processed at the last step, presumably to avoid E1 fusion activation before its final export to cell surface. E2 C-terminus contains a transitory transmembrane that would be disrupted by palmitoylation, resulting in reorientation of the C-terminal tail from lumenal to cytoplasmic side. This step is critical since E2 C-terminus is involved in budding by interacting with capsid proteins. This release of E2 C-terminus in cytoplasm occurs lately in protein export, and precludes premature assembly of particles at the endoplasmic reticulum membrane. Acts as a viroporin that participates in virus glycoprotein processing and transport to the plasma membrane, cell permeabilization and budding of viral particles. Disrupts the calcium homeostasis of the cell, probably at the endoplasmic reticulum level. This leads to cytoplasmic calcium elevation. Because of its lipophilic properties, the 6K protein is postulated to influence the selection of lipids that interact with the transmembrane domains of the glycoproteins, which, in turn, affects the deformability of the bilayer required for the extreme curvature that occurs as budding proceeds. Present in low amount in virions, about 3% compared to viral glycoproteins. Functionally, class II viral fusion protein. Fusion activity is inactive as long as E1 is bound to E2 in mature virion. After virus attachment to cell receptor LDLRAD3 and endocytosis, acidification of the endosome induce dissociation of E1/E2 heterodimer and concomitant trimerization of the E1 subunits. This E1 trimer is fusion active, and promotes release of viral nucleocapsid in cytoplasm after endosome and viral membrane fusion. Efficient fusion requires the presence of cholesterol and sphingolipid in the target membrane. The polypeptide is Structural polyprotein (Venezuelan equine encephalitis virus (strain 3880) (VEEV)).